The following is a 62-amino-acid chain: Large ribosomal subunit protein uL29 (62 aa).

It belongs to the universal ribosomal protein uL29 family.

The polypeptide is Large ribosomal subunit protein uL29 (Geotalea daltonii (strain DSM 22248 / JCM 15807 / FRC-32) (Geobacter daltonii)).